A 391-amino-acid chain; its full sequence is Rhizopuspepsin-3 (391 aa).

Residues 1–21 (MKFTLISSCVTLALMTLSIEA) form the signal peptide. Positions 22 to 68 (APSGKKVNIPLTKNKDYKPNAKNAIQKAIAKYHRHRSVSSSNSTSTD) are cleaved as a propeptide — activation peptide. The Peptidase A1 domain occupies 84-388 (YYGEVTVGTP…NPEVPHVQIA (305 aa)). Residue Asp-102 is part of the active site. Residues Cys-115 and Cys-118 are joined by a disulfide bond. The active site involves Asp-285. An intrachain disulfide couples Cys-319 to Cys-352.

The protein belongs to the peptidase A1 family.

It catalyses the reaction Hydrolysis of proteins with broad specificity similar to that of pepsin A, preferring hydrophobic residues at P1 and P1'. Clots milk and activates trypsinogen. Does not cleave 4-Gln-|-His-5, but does cleave 10-His-|-Leu-11 and 12-Val-|-Glu-13 in B chain of insulin.. The polypeptide is Rhizopuspepsin-3 (Rhizopus niveus).